Reading from the N-terminus, the 72-residue chain is Translation initiation factor IF-1 (72 aa).

The S1-like domain maps to 1 to 72; the sequence is MAKEDNIEMQ…SKGRIVFRSR (72 aa).

Belongs to the IF-1 family. In terms of assembly, component of the 30S ribosomal translation pre-initiation complex which assembles on the 30S ribosome in the order IF-2 and IF-3, IF-1 and N-formylmethionyl-tRNA(fMet); mRNA recruitment can occur at any time during PIC assembly.

The protein localises to the cytoplasm. Functionally, one of the essential components for the initiation of protein synthesis. Stabilizes the binding of IF-2 and IF-3 on the 30S subunit to which N-formylmethionyl-tRNA(fMet) subsequently binds. Helps modulate mRNA selection, yielding the 30S pre-initiation complex (PIC). Upon addition of the 50S ribosomal subunit IF-1, IF-2 and IF-3 are released leaving the mature 70S translation initiation complex. This is Translation initiation factor IF-1 from Shewanella loihica (strain ATCC BAA-1088 / PV-4).